Reading from the N-terminus, the 1058-residue chain is Carbamoyl phosphate synthase large chain (1058 aa).

Residues 1-401 (MAKRTDIKKI…CLLKACRSLE (401 aa)) are carboxyphosphate synthetic domain. ATP is bound by residues Arg-129, Arg-169, Gly-175, Gly-176, Arg-208, Ile-210, Glu-215, Gly-241, Ile-242, His-243, Gln-284, and Glu-298. In terms of domain architecture, ATP-grasp 1 spans 133–327 (KQLMKELGEP…IAKIAAKIAV (195 aa)). Mg(2+)-binding residues include Gln-284, Glu-298, and Asn-300. Mn(2+)-binding residues include Gln-284, Glu-298, and Asn-300. The oligomerization domain stretch occupies residues 402 to 546 (IGVHHNELKG…YSTYEWENES (145 aa)). The tract at residues 547-929 (IKSEKESVIV…ALYKAFEASY (383 aa)) is carbamoyl phosphate synthetic domain. Positions 671–861 (EKALKELGIP…MAQVATKLIL (191 aa)) constitute an ATP-grasp 2 domain. Residues Arg-707, Ser-746, Ile-748, Glu-752, Gly-777, Val-778, His-779, Ser-780, Gln-820, and Glu-832 each coordinate ATP. Mg(2+) is bound by residues Gln-820, Glu-832, and Asn-834. Mn(2+) is bound by residues Gln-820, Glu-832, and Asn-834. The 129-residue stretch at 930 to 1058 (LHMPEYGTIV…ESRTFSIEAI (129 aa)) folds into the MGS-like domain. An allosteric domain region spans residues 930-1058 (LHMPEYGTIV…ESRTFSIEAI (129 aa)).

This sequence belongs to the CarB family. As to quaternary structure, composed of two chains; the small (or glutamine) chain promotes the hydrolysis of glutamine to ammonia, which is used by the large (or ammonia) chain to synthesize carbamoyl phosphate. Tetramer of heterodimers (alpha,beta)4. Requires Mg(2+) as cofactor. The cofactor is Mn(2+).

It carries out the reaction hydrogencarbonate + L-glutamine + 2 ATP + H2O = carbamoyl phosphate + L-glutamate + 2 ADP + phosphate + 2 H(+). The catalysed reaction is hydrogencarbonate + NH4(+) + 2 ATP = carbamoyl phosphate + 2 ADP + phosphate + 2 H(+). The protein operates within amino-acid biosynthesis; L-arginine biosynthesis; carbamoyl phosphate from bicarbonate: step 1/1. Its pathway is pyrimidine metabolism; UMP biosynthesis via de novo pathway; (S)-dihydroorotate from bicarbonate: step 1/3. In terms of biological role, large subunit of the glutamine-dependent carbamoyl phosphate synthetase (CPSase). CPSase catalyzes the formation of carbamoyl phosphate from the ammonia moiety of glutamine, carbonate, and phosphate donated by ATP, constituting the first step of 2 biosynthetic pathways, one leading to arginine and/or urea and the other to pyrimidine nucleotides. The large subunit (synthetase) binds the substrates ammonia (free or transferred from glutamine from the small subunit), hydrogencarbonate and ATP and carries out an ATP-coupled ligase reaction, activating hydrogencarbonate by forming carboxy phosphate which reacts with ammonia to form carbamoyl phosphate. The sequence is that of Carbamoyl phosphate synthase large chain from Streptococcus equi subsp. equi (strain 4047).